The primary structure comprises 155 residues: Vasotocin-neurophysin VT 2 (155 aa).

Positions 1–20 are cleaved as a signal peptide; it reads MSVCAVLLLCVAGLLCLSSA. The cysteines at positions 21 and 26 are disulfide-linked. Gly29 carries the glycine amide modification. 7 disulfide bridges follow: Cys42–Cys86, Cys45–Cys59, Cys53–Cys76, Cys60–Cys66, Cys93–Cys106, Cys100–Cys118, and Cys107–Cys112. Residues 119–128 show a composition bias toward acidic residues; the sequence is SEDSESEEPA. Residues 119 to 139 form a disordered region; that stretch reads SEDSESEEPADQNTLGASPGE.

Belongs to the vasopressin/oxytocin family.

It localises to the secreted. Vasotocin is an antidiuretic hormone. The chain is Vasotocin-neurophysin VT 2 from Catostomus commersonii (White sucker).